We begin with the raw amino-acid sequence, 653 residues long: tRNA 5-methylaminomethyl-2-thiouridine biosynthesis bifunctional protein MnmC (653 aa).

Positions 1–236 (MPDRLVPATL…KFAMLVGEYA (236 aa)) are tRNA (mnm(5)s(2)U34)-methyltransferase. The tract at residues 260-653 (IGAGLAGCAL…IRALRGRKLG (394 aa)) is FAD-dependent cmnm(5)s(2)U34 oxidoreductase.

This sequence in the N-terminal section; belongs to the methyltransferase superfamily. tRNA (mnm(5)s(2)U34)-methyltransferase family. In the C-terminal section; belongs to the DAO family. FAD serves as cofactor.

The protein localises to the cytoplasm. The catalysed reaction is 5-aminomethyl-2-thiouridine(34) in tRNA + S-adenosyl-L-methionine = 5-methylaminomethyl-2-thiouridine(34) in tRNA + S-adenosyl-L-homocysteine + H(+). Functionally, catalyzes the last two steps in the biosynthesis of 5-methylaminomethyl-2-thiouridine (mnm(5)s(2)U) at the wobble position (U34) in tRNA. Catalyzes the FAD-dependent demodification of cmnm(5)s(2)U34 to nm(5)s(2)U34, followed by the transfer of a methyl group from S-adenosyl-L-methionine to nm(5)s(2)U34, to form mnm(5)s(2)U34. The sequence is that of tRNA 5-methylaminomethyl-2-thiouridine biosynthesis bifunctional protein MnmC from Burkholderia vietnamiensis (strain G4 / LMG 22486) (Burkholderia cepacia (strain R1808)).